We begin with the raw amino-acid sequence, 516 residues long: 3-phosphoshikimate 1-carboxyvinyltransferase, chloroplastic (516 aa).

Residues 1-72 (MAQINNMAQG…RISASVATAQ (72 aa)) constitute a chloroplast transit peptide. The 3-phosphoshikimate site is built by K95, S96, and R100. K95 lines the phosphoenolpyruvate pocket. Phosphoenolpyruvate contacts are provided by G173 and R203. 3-phosphoshikimate is bound by residues S250, S251, Q252, S278, D403, and K430. Q252 serves as a coordination point for phosphoenolpyruvate. The active-site Proton acceptor is D403. Positions 434, 476, and 501 each coordinate phosphoenolpyruvate.

It belongs to the EPSP synthase family. In terms of tissue distribution, mostly expressed in flower petals, and, to a lower extent, in roots, stems and anthers, but barely in leaves.

Its subcellular location is the plastid. It localises to the chloroplast. It carries out the reaction 3-phosphoshikimate + phosphoenolpyruvate = 5-O-(1-carboxyvinyl)-3-phosphoshikimate + phosphate. The protein operates within metabolic intermediate biosynthesis; chorismate biosynthesis; chorismate from D-erythrose 4-phosphate and phosphoenolpyruvate: step 6/7. Competitively inhibited by glyphosate. Functionally, catalyzes the transfer of the enolpyruvyl moiety of phosphoenolpyruvate (PEP) to the 5-hydroxyl of shikimate-3-phosphate (S3P) to produce enolpyruvyl shikimate-3-phosphate and inorganic phosphate. Involved in the accumulation of volatile benzoides in flowers, scent attracting pollinators (e.g. the night-active hawkmoth pollinator Manduca sexta). This Petunia hybrida (Petunia) protein is 3-phosphoshikimate 1-carboxyvinyltransferase, chloroplastic.